We begin with the raw amino-acid sequence, 370 residues long: MPVLSTTHRLPLSVERERNREDDSLTNLQWLQDFSILSTDLSSIANSRPPVPRVSQGPCSPPAGDTASCQAPRTGKQRVTVPTAWASLPTLSPSPVQEVDYRTNANVKPPYSYATLICMAMEASQQRKLTLSAIYNWITQNFCYYRHADPSWQNSIRHNLSLNKCFMKVPRGKDEPGKGGFWQMDPRYADMFVNGVLKRRRMPSSHLDPPRCNKTIGHHPYLPVSRPGSHHMQHISGGHRQSRRYEKPNPVLPAFRAPERQGDTLFTPEDPLQGSNFDDLDLQAALISMCWEGDLAASNLNSTLTGNSGMDMNQQDPPMQDNHWYLSTEGQQTWEQVKEEPVVEQWYSETGFVEDVLYECPPWERVETLL.

The disordered stretch occupies residues 45 to 74 (ANSRPPVPRVSQGPCSPPAGDTASCQAPRT). The segment at residues 108–202 (KPPYSYATLI…VNGVLKRRRM (95 aa)) is a DNA-binding region (fork-head). Residues 227–246 (PGSHHMQHISGGHRQSRRYE) form a disordered region.

Belongs to the FOXJ1 family.

The protein resides in the nucleus. Functionally, key transcription factor required for motile ciliogenesis. Activates genes essential for motile cilia formation and function. This chain is Forkhead box protein J1.2, found in Xenopus laevis (African clawed frog).